The sequence spans 168 residues: Oocyte-secreted protein 2 (168 aa).

Residues 1 to 21 form the signal peptide; the sequence is MGVSMALEVLVYLAVLVWTCA.

Belongs to the PLAC1 family. Expressed in ovaries. Highly expressed in the germinal vesicles oocytes and metaphase II oocytes.

It is found in the secreted. Its subcellular location is the cytoplasm. The sequence is that of Oocyte-secreted protein 2 (Oosp2) from Mus musculus (Mouse).